The following is a 338-amino-acid chain: MATQHPIGKKTACVVGGTGFVASLLVKLLLQKGYAVNTTVRDPDNQKKVSHLLELQELGDLKIFRADLTDELSFEAPIAGCDFVFHVATPVHFASEDPENDMIKPAIQGVVNVMKACTRAKSVKRVILTSSAAAVTINQLDGTGLVVDEKNWTDIEFLTSAKPPTWGYPASKTLAEKAAWKFAEENNIDLITVIPTLMAGSSLTSDVPSSIGLAMSLITGNEFLINGMKGMQMLSGSVSIAHVEDVCRAHIFVAEKESASGRYICCAANTSVPELAKFLSKRYPQYKVPTDFGDFPPKSKLIISSEKLVKEGFSFKYGIEEIYDESVEYFKAKGLLQN.

NADP(+)-binding positions include 18 to 21 (TGFV), Lys48, 87 to 90 (VATP), and Tyr168.

This sequence belongs to the NAD(P)-dependent epimerase/dehydratase family. Dihydroflavonol-4-reductase subfamily. Expressed in seeds, grape skins, flowers and leaves.

The enzyme catalyses a (2S,3R)-flavan-3-ol + 2 NADP(+) = an anthocyanidin with a 3-hydroxy group + 2 NADPH + 2 H(+). It catalyses the reaction a (2S,3S)-flavan-3-ol + 2 NADP(+) = an anthocyanidin with a 3-hydroxy group + 2 NADPH + 2 H(+). The protein operates within secondary metabolite biosynthesis; flavonoid biosynthesis. With respect to regulation, inhibited at NaCl concentrations higher than 200 mM. Functionally, produces the terminal flavan-3-ol monomers required for the formation of proanthocyanidins or condensed tannins in leaves and flowers, as well as in the skin and seeds of developing berries. Behaves as a reductase and as a C-3 epimerase. Catalyzes the double reduction of anthocyanidins, producing a mixture of (2S,3S)- and (2S,3R)-flavan-3-ols. The enzyme catalyzes sequential hydride transfers to C-2 and C-4, respectively and epimerization at C-3 is achieved by tautomerization that occurs between the two hydride transfers. Converts cyanidin, pelargonidin and delphinidin into catechin and epicatechin, afzelechin and epiafzelechin, and gallocatechin and epigallocatechin respectively. This is Anthocyanidin reductase ((2S)-flavan-3-ol-forming) from Vitis vinifera (Grape).